The chain runs to 65 residues: Venom protein Vn4.6 (65 aa).

The first 23 residues, Met-1 to Ala-23, serve as a signal peptide directing secretion.

Post-translationally, contains 2 disulfide bonds. Expressed by the venom gland.

It is found in the secreted. Its function is as follows. Endoparasitoid venom protein that interferes with the activation of host hemolymph prophenoloxidase. May act in conjunction with other venom proteins (such as Vn50), by competitive binding to the zymogen and thereby interrupting the enzyme. In Cotesia rubecula (Cabbage white butterfly parasite), this protein is Venom protein Vn4.6.